Consider the following 449-residue polypeptide: Phosphoglucosamine mutase (449 aa).

Serine 100 functions as the Phosphoserine intermediate in the catalytic mechanism. Mg(2+)-binding residues include serine 100, aspartate 241, aspartate 243, and aspartate 245. Serine 100 is subject to Phosphoserine.

The protein belongs to the phosphohexose mutase family. Mg(2+) is required as a cofactor. Activated by phosphorylation.

The enzyme catalyses alpha-D-glucosamine 1-phosphate = D-glucosamine 6-phosphate. In terms of biological role, catalyzes the conversion of glucosamine-6-phosphate to glucosamine-1-phosphate. The protein is Phosphoglucosamine mutase of Caldicellulosiruptor saccharolyticus (strain ATCC 43494 / DSM 8903 / Tp8T 6331).